A 62-amino-acid chain; its full sequence is Photosystem II reaction center protein Z (62 aa).

2 helical membrane passes run 8–28 (ALFALVAISFILVVGVPVILA) and 41–61 (FSGASLWIFLVFVVGILNSFI).

This sequence belongs to the PsbZ family. PSII is composed of 1 copy each of membrane proteins PsbA, PsbB, PsbC, PsbD, PsbE, PsbF, PsbH, PsbI, PsbJ, PsbK, PsbL, PsbM, PsbT, PsbY, PsbZ, Psb30/Ycf12, at least 3 peripheral proteins of the oxygen-evolving complex and a large number of cofactors. It forms dimeric complexes.

The protein localises to the plastid. It localises to the chloroplast thylakoid membrane. May control the interaction of photosystem II (PSII) cores with the light-harvesting antenna, regulates electron flow through the 2 photosystem reaction centers. PSII is a light-driven water plastoquinone oxidoreductase, using light energy to abstract electrons from H(2)O, generating a proton gradient subsequently used for ATP formation. The sequence is that of Photosystem II reaction center protein Z from Chara vulgaris (Common stonewort).